The following is a 99-amino-acid chain: Co-chaperonin GroES (99 aa).

Belongs to the GroES chaperonin family. In terms of assembly, heptamer of 7 subunits arranged in a ring. Interacts with the chaperonin GroEL.

Its subcellular location is the cytoplasm. Its function is as follows. Together with the chaperonin GroEL, plays an essential role in assisting protein folding. The GroEL-GroES system forms a nano-cage that allows encapsulation of the non-native substrate proteins and provides a physical environment optimized to promote and accelerate protein folding. GroES binds to the apical surface of the GroEL ring, thereby capping the opening of the GroEL channel. This Corynebacterium glutamicum (strain R) protein is Co-chaperonin GroES.